The sequence spans 828 residues: Vacuolar transporter chaperone complex subunit 2 (828 aa).

In terms of domain architecture, SPX spans 1-146 (MLFGVKLANE…PKYPSVKSLL (146 aa)). Over 1 to 693 (MLFGVKLANE…EAKVWLANER (693 aa)) the chain is Cytoplasmic. The tract at residues 127-134 (KIVKKHDK) is important for inositol polyphosphate binding. A phosphoserine mark is found at Ser182, Ser187, Ser196, Ser264, Ser583, Ser615, and Ser616. Residues 580-636 (RRLSNLKEPQHQAAVPVSQEENERITSQGDLEADGSSDEETEQEPHSKRSKKVRRRK) are disordered. Over residues 610 to 621 (LEADGSSDEETE) the composition is skewed to acidic residues. Thr620 carries the phosphothreonine modification. Residue Ser626 is modified to Phosphoserine. The segment covering 627 to 636 (KRSKKVRRRK) has biased composition (basic residues). Ser657 carries the post-translational modification Phosphoserine. The helical transmembrane segment at 694–716 (TFNRWLSVTSLLSVLTFSIYNSV) threads the bilayer. The Vacuolar portion of the chain corresponds to 717–727 (KKAEYPTLANY). The chain crosses the membrane as a helical span at residues 728–748 (MAYVYFGLTIFCALWSYSIYM). At 749–766 (KRVDIIQQRSGQHLDAPL) the chain is on the cytoplasmic side. A helical membrane pass occupies residues 767–787 (GPVLVSIVLFVTLVVNFVMAF). The Vacuolar segment spans residues 788 to 828 (RNAAKSRQELQIQNLEVPERIPEVLRPLQNYLFKLMGPSSD).

This sequence belongs to the VTC2/3 family. In terms of assembly, the VTC core complex is an integral membrane heterooligomer composed of the catalytic subunit VTC4 and the accessory subunits VTC1, VTC2 and VTC3. The complex exists in 2 different sub-complexes: VTC1-VTC2-VCT4 and VCT1-VTC3-VTC4. The VCT1-VTC3-VTC4 subcomplex is mostly found on the vacuolar membrane. The VTC1-VTC2-VCT4 subcomplex is observed in the cell periphery, probably ER and nuclear envelope, but localizes to the vacuole under phosphate starvation. Each subunit contains 3 transmembrane helices. VTC1 is a small membrane protein without hydrophilic domain. VTC2, VTC3 and VTC4 are related and have 2 hydrophilic domains that face the cytosol, an N-terminal SPX domain and the central core domain. The central core in VTC4 is the catalytic domain, with the essential catalytic lysine replaced by isoleucine and leucine in VTC2 and VTC3, respectively. The core complex associates with the accessory subunit VTC5. The complex interacts with the v-SNARE NYV1 and with the V(0) subunit of V-ATPase VPH1.

It localises to the vacuole membrane. The protein resides in the cytoplasm. The protein localises to the cell cortex. Its subcellular location is the endoplasmic reticulum membrane. It is found in the cytoplasmic vesicle. It localises to the autophagosome membrane. Accessory subunit of the vacuolar transporter chaperone (VTC) complex. The VTC complex acts as a vacuolar polyphosphate polymerase that catalyzes the synthesis of inorganic polyphosphate (polyP) via transfer of phosphate from ATP to a growing polyP chain, releasing ADP. VTC exposes its catalytic domain VTC4 to the cytosol, where the growing polyP chain winds through a tunnel-shaped pocket, integrating cytoplasmic polymer synthesis with polyP membrane translocation. The VTC complex carries 9 vacuolar transmembrane domains, which are likely to constitute the translocation channel into the organelle lumen. PolyP synthesis is tightly coupled to its transport into the vacuole lumen, in order to avoid otherwise toxic intermediates in the cytosol, and it depends on the proton gradient across the membrane, formed by V-ATPase. Binds inositol hexakisphosphate (Ins6P) and similar inositol polyphosphates, such as 5-diphospho-inositol pentakisphosphate (5-InsP7); these are important intracellular signaling molecules. Inositol polyphosphate binding promotes vacuolar polyphosphate synthesis. The VTC complex also plays a role in vacuolar membrane fusion. Required for SEC18/NSF activity in SNARE priming, membrane binding of LMA1 and V(0) trans-complex formation. The protein is Vacuolar transporter chaperone complex subunit 2 of Saccharomyces cerevisiae (strain ATCC 204508 / S288c) (Baker's yeast).